A 252-amino-acid polypeptide reads, in one-letter code: Chitooligosaccharide deacetylase (252 aa).

Mg(2+)-binding residues include His-61 and His-125.

The protein belongs to the YdjC deacetylase family. ChbG subfamily. As to quaternary structure, homodimer. It depends on Mg(2+) as a cofactor.

It is found in the cytoplasm. The enzyme catalyses N,N'-diacetylchitobiose + H2O = N-acetyl-beta-D-glucosaminyl-(1-&gt;4)-D-glucosamine + acetate. It catalyses the reaction diacetylchitobiose-6'-phosphate + H2O = N'-monoacetylchitobiose-6'-phosphate + acetate. Its pathway is glycan degradation; chitin degradation. Involved in the degradation of chitin. ChbG is essential for growth on the acetylated chitooligosaccharides chitobiose and chitotriose but is dispensable for growth on cellobiose and chitosan dimer, the deacetylated form of chitobiose. Deacetylation of chitobiose-6-P and chitotriose-6-P is necessary for both the activation of the chb promoter by the regulatory protein ChbR and the hydrolysis of phosphorylated beta-glucosides by the phospho-beta-glucosidase ChbF. Catalyzes the removal of only one acetyl group from chitobiose-6-P to yield monoacetylchitobiose-6-P, the inducer of ChbR and the substrate of ChbF. The chain is Chitooligosaccharide deacetylase from Salmonella paratyphi A (strain ATCC 9150 / SARB42).